The following is a 400-amino-acid chain: Subtilisin-like protease 1 (400 aa).

An N-terminal signal peptide occupies residues 1–20 (MKFSQSLIALAACFLPLIAA). Residues 21 to 119 (APVEAQHAKI…IEMDGKVQAN (99 aa)) constitute a propeptide that is removed on maturation. Residues 42-117 (SYIVVFNKGV…AWIEMDGKVQ (76 aa)) form the Inhibitor I9 domain. N-linked (GlcNAc...) asparagine glycosylation occurs at Asn82. One can recognise a Peptidase S8 domain in the interval 128–400 (TWGLGRISHK…NLIAYNGNGA (273 aa)). Catalysis depends on charge relay system residues Asp160, His192, and Ser345.

The protein belongs to the peptidase S8 family.

The protein resides in the secreted. Its function is as follows. Major secreted subtilisin-like serine endopeptidase. Mediates the degradation of collagen, the major structural protein in the mammalian host. Degrades the nonhelical regions of collagen that function in the cross-linking of the helical components. May function as virulence factor involved in epidermal wing necrosis observed in white nose syndrome (WNS) in bats. The polypeptide is Subtilisin-like protease 1 (Pseudogymnoascus destructans (strain ATCC MYA-4855 / 20631-21) (Bat white-nose syndrome fungus)).